The following is a 223-amino-acid chain: Putative thymidylate synthase (223 aa).

Cys-146 is a catalytic residue.

This sequence belongs to the thymidylate synthase family. Archaeal-type ThyA subfamily. In terms of assembly, monomer.

The protein localises to the cytoplasm. It participates in pyrimidine metabolism; dTTP biosynthesis. May catalyze the biosynthesis of dTMP using an unknown cosubstrate. In vitro, also catalyzes the dehalogenation of 5-bromo-deoxyuridine monophosphate (Br-dUMP) and the tritium exchange of [5-3H]deoxyuridine monophosphate ([5-3H]dUMP). The protein is Putative thymidylate synthase (thyA) of Methanothermobacter marburgensis (strain ATCC BAA-927 / DSM 2133 / JCM 14651 / NBRC 100331 / OCM 82 / Marburg) (Methanobacterium thermoautotrophicum).